Reading from the N-terminus, the 440-residue chain is Methionine aminopeptidase 2-2 (440 aa).

The interval 1–102 is disordered; it reads MAAQVPTEAL…KGQEEEYRDE (102 aa). Positions 36–46 are enriched in acidic residues; it reads DSDDSDEEGEE. A compositionally biased stretch (basic residues) spans 56–70; the sequence is AKKKKKNKKKKKKKS. Residue His-194 participates in substrate binding. A divalent metal cation is bound by residues Asp-214, Asp-225, and His-294. Position 302 (His-302) interacts with substrate. Positions 327 and 421 each coordinate a divalent metal cation.

It belongs to the peptidase M24A family. Methionine aminopeptidase eukaryotic type 2 subfamily. It depends on Co(2+) as a cofactor. Requires Zn(2+) as cofactor. Mn(2+) is required as a cofactor. Fe(2+) serves as cofactor.

The protein localises to the cytoplasm. The enzyme catalyses Release of N-terminal amino acids, preferentially methionine, from peptides and arylamides.. Its function is as follows. Cotranslationally removes the N-terminal methionine from nascent proteins. The N-terminal methionine is often cleaved when the second residue in the primary sequence is small and uncharged (Met-Ala-, Cys, Gly, Pro, Ser, Thr, or Val). The chain is Methionine aminopeptidase 2-2 from Colletotrichum graminicola (strain M1.001 / M2 / FGSC 10212) (Maize anthracnose fungus).